Reading from the N-terminus, the 429-residue chain is Histidine--tRNA ligase (429 aa).

This sequence belongs to the class-II aminoacyl-tRNA synthetase family. In terms of assembly, homodimer.

It is found in the cytoplasm. It catalyses the reaction tRNA(His) + L-histidine + ATP = L-histidyl-tRNA(His) + AMP + diphosphate + H(+). This Desulfotalea psychrophila (strain LSv54 / DSM 12343) protein is Histidine--tRNA ligase.